We begin with the raw amino-acid sequence, 318 residues long: Small ribosomal subunit biogenesis GTPase RsgA (318 aa).

Residues arginine 82–phenylalanine 246 enclose the CP-type G domain. GTP contacts are provided by residues asparagine 132–aspartate 135 and glycine 186–threonine 194. Cysteine 270, cysteine 275, histidine 277, and cysteine 283 together coordinate Zn(2+).

This sequence belongs to the TRAFAC class YlqF/YawG GTPase family. RsgA subfamily. In terms of assembly, monomer. Associates with 30S ribosomal subunit, binds 16S rRNA. It depends on Zn(2+) as a cofactor.

It is found in the cytoplasm. Functionally, one of several proteins that assist in the late maturation steps of the functional core of the 30S ribosomal subunit. Helps release RbfA from mature subunits. May play a role in the assembly of ribosomal proteins into the subunit. Circularly permuted GTPase that catalyzes slow GTP hydrolysis, GTPase activity is stimulated by the 30S ribosomal subunit. The sequence is that of Small ribosomal subunit biogenesis GTPase RsgA from Variovorax paradoxus (strain S110).